Here is a 468-residue protein sequence, read N- to C-terminus: UDP-N-acetylmuramoylalanine--D-glutamate ligase (468 aa).

117-123 (GTDGKTT) is a binding site for ATP.

The protein belongs to the MurCDEF family.

Its subcellular location is the cytoplasm. The catalysed reaction is UDP-N-acetyl-alpha-D-muramoyl-L-alanine + D-glutamate + ATP = UDP-N-acetyl-alpha-D-muramoyl-L-alanyl-D-glutamate + ADP + phosphate + H(+). The protein operates within cell wall biogenesis; peptidoglycan biosynthesis. In terms of biological role, cell wall formation. Catalyzes the addition of glutamate to the nucleotide precursor UDP-N-acetylmuramoyl-L-alanine (UMA). This is UDP-N-acetylmuramoylalanine--D-glutamate ligase from Chloroherpeton thalassium (strain ATCC 35110 / GB-78).